The primary structure comprises 935 residues: ABC transporter A family member 7 (935 aa).

A run of 7 helical transmembrane segments spans residues 34–54 (LIMIPFYLCILLVIIQILFDT), 338–358 (IASLIGPLFFTWVILLLFPVI), 392–412 (FLTISVLYVICLMIFGSAIGL), 424–444 (FVFYFLYLNLQIALAFLVSSV), 454–474 (ASYIYVFGSGLLGLFLLNFLI), 483–503 (WIIVMELYPGFSLYRGLYELA), and 528–548 (DDVFYIIVVEWFLALIAAYYI). The segment at 571–591 (SLRRPSLQRQGSKVSVDMEKP) is disordered. Residues 613–850 (IVCDNLKKVY…YGGSYVFTMT (238 aa)) form the ABC transporter domain. Residue 651–658 (GPNGAGKT) participates in ATP binding.

This sequence belongs to the ABC transporter superfamily. ABCA family. CPR flippase (TC 3.A.1.211) subfamily.

The protein localises to the membrane. This Arabidopsis thaliana (Mouse-ear cress) protein is ABC transporter A family member 7 (ABCA7).